The sequence spans 55 residues: Large ribosomal subunit protein bL33A (55 aa).

Belongs to the bacterial ribosomal protein bL33 family.

This Rhodococcus jostii (strain RHA1) protein is Large ribosomal subunit protein bL33A.